The sequence spans 627 residues: Sister chromatid cohesion 1 protein 1 (627 aa).

Disordered regions lie at residues 211–294, 395–416, and 461–510; these read GDDE…TATS, MHNHHQTDHHERSDTSSQNLDS, and GDDV…VAEE. Basic and acidic residues-rich tracts occupy residues 254-263, 272-282, and 395-408; these read EQQENRRDGF, IPDKEEHDRPQ, and MHNHHQTDHHERSD. Positions 467-487 are enriched in polar residues; that stretch reads MPSTPSARGAASINNIEISSK.

This sequence belongs to the rad21 family. As to quaternary structure, component of the cohesin complex. Isoform 2 is expressed at low levels in buds, leaves and roots, whereas expression of isoform 1 is confined to buds.

It is found in the nucleus. Functionally, involved in chromosome condensation, pairing and segregation during meiosis. Responsible for cohesion between replicated sister chromatids. The protein is Sister chromatid cohesion 1 protein 1 (SYN1) of Arabidopsis thaliana (Mouse-ear cress).